The sequence spans 357 residues: Phosphoserine aminotransferase (357 aa).

Arg41 is an L-glutamate binding site. Residues 75-76, Trp100, Thr150, Asp170, and Gln193 contribute to the pyridoxal 5'-phosphate site; that span reads GT. The residue at position 194 (Lys194) is an N6-(pyridoxal phosphate)lysine. 234 to 235 contributes to the pyridoxal 5'-phosphate binding site; it reads NT.

It belongs to the class-V pyridoxal-phosphate-dependent aminotransferase family. SerC subfamily. In terms of assembly, homodimer. Requires pyridoxal 5'-phosphate as cofactor.

It localises to the cytoplasm. The catalysed reaction is O-phospho-L-serine + 2-oxoglutarate = 3-phosphooxypyruvate + L-glutamate. The enzyme catalyses 4-(phosphooxy)-L-threonine + 2-oxoglutarate = (R)-3-hydroxy-2-oxo-4-phosphooxybutanoate + L-glutamate. The protein operates within amino-acid biosynthesis; L-serine biosynthesis; L-serine from 3-phospho-D-glycerate: step 2/3. Functionally, catalyzes the reversible conversion of 3-phosphohydroxypyruvate to phosphoserine and of 3-hydroxy-2-oxo-4-phosphonooxybutanoate to phosphohydroxythreonine. The polypeptide is Phosphoserine aminotransferase (Lactiplantibacillus plantarum (strain ATCC BAA-793 / NCIMB 8826 / WCFS1) (Lactobacillus plantarum)).